The chain runs to 337 residues: 1-aminocyclopropane-1-carboxylate deaminase (337 aa).

The residue at position 50 (lysine 50) is an N6-(pyridoxal phosphate)lysine.

The protein belongs to the ACC deaminase/D-cysteine desulfhydrase family. Homotrimer. Pyridoxal 5'-phosphate serves as cofactor.

The enzyme catalyses 1-aminocyclopropane-1-carboxylate + H2O = 2-oxobutanoate + NH4(+). Functionally, catalyzes a cyclopropane ring-opening reaction, the irreversible conversion of 1-aminocyclopropane-1-carboxylate (ACC) to ammonia and alpha-ketobutyrate. Allows growth on ACC as a nitrogen source. The protein is 1-aminocyclopropane-1-carboxylate deaminase of Mesorhizobium japonicum (strain LMG 29417 / CECT 9101 / MAFF 303099) (Mesorhizobium loti (strain MAFF 303099)).